We begin with the raw amino-acid sequence, 218 residues long: GTP cyclohydrolase 1 (218 aa).

Residues C107, H110, and C178 each contribute to the Zn(2+) site.

This sequence belongs to the GTP cyclohydrolase I family. As to quaternary structure, homomer.

It carries out the reaction GTP + H2O = 7,8-dihydroneopterin 3'-triphosphate + formate + H(+). Its pathway is cofactor biosynthesis; 7,8-dihydroneopterin triphosphate biosynthesis; 7,8-dihydroneopterin triphosphate from GTP: step 1/1. This is GTP cyclohydrolase 1 from Azorhizobium caulinodans (strain ATCC 43989 / DSM 5975 / JCM 20966 / LMG 6465 / NBRC 14845 / NCIMB 13405 / ORS 571).